The sequence spans 51 residues: Protein YrhD (51 aa).

This chain is Protein YrhD (yrhD), found in Escherichia coli (strain K12).